The chain runs to 120 residues: Large ribosomal subunit protein bL17 (120 aa).

It belongs to the bacterial ribosomal protein bL17 family. Part of the 50S ribosomal subunit. Contacts protein L32.

The protein is Large ribosomal subunit protein bL17 of Shouchella clausii (strain KSM-K16) (Alkalihalobacillus clausii).